The following is a 335-amino-acid chain: Twinfilin (335 aa).

2 consecutive ADF-H domains span residues 4-140 (SSGI…QHKL) and 176-316 (GISF…NELH). A disordered region spans residues 307-335 (SEESIINELHPPKVEEKKAFSKPSRPGRK). Basic and acidic residues predominate over residues 316 to 325 (HPPKVEEKKA).

It belongs to the actin-binding proteins ADF family. Twinfilin subfamily. As to quaternary structure, interacts with G-actin; ADP-actin form.

It is found in the cytoplasm. The protein localises to the cytoskeleton. Its subcellular location is the cell cortex. Actin-binding protein involved in motile and morphological processes. Inhibits actin polymerization, likely by sequestering G-actin. This is Twinfilin (twfA) from Dictyostelium discoideum (Social amoeba).